We begin with the raw amino-acid sequence, 458 residues long: Exodeoxyribonuclease 7 large subunit (458 aa).

It belongs to the XseA family. Heterooligomer composed of large and small subunits.

Its subcellular location is the cytoplasm. It carries out the reaction Exonucleolytic cleavage in either 5'- to 3'- or 3'- to 5'-direction to yield nucleoside 5'-phosphates.. Bidirectionally degrades single-stranded DNA into large acid-insoluble oligonucleotides, which are then degraded further into small acid-soluble oligonucleotides. This is Exodeoxyribonuclease 7 large subunit from Escherichia coli O6:H1 (strain CFT073 / ATCC 700928 / UPEC).